Here is a 198-residue protein sequence, read N- to C-terminus: MTDALDSLISNHLARSRAAMERAAVDGALLASAERIATAIIGALRGGHKLLIVGNGGSAADAQHIAAEIVGRYKQERPAFAAIALTTDTSALTAIGNDYGFDHVFARQVEGLGASGDVLLAISTSGRSPSILNALRKARERGLVTIGFTGTNGLGMGELCDELLVAPSDDTPLIQQIHLATAHGICETIEAALMQDAR.

The region spanning 40–198 (IIGALRGGHK…IEAALMQDAR (159 aa)) is the SIS domain. 55–57 (NGG) lines the substrate pocket. Residues His-64 and Glu-68 each contribute to the Zn(2+) site. Residues Glu-68, 97-98 (ND), 123-125 (STS), Ser-128, and Gln-175 contribute to the substrate site. Gln-175 and His-183 together coordinate Zn(2+).

The protein belongs to the SIS family. GmhA subfamily. As to quaternary structure, homotetramer. Zn(2+) is required as a cofactor.

The protein localises to the cytoplasm. It catalyses the reaction 2 D-sedoheptulose 7-phosphate = D-glycero-alpha-D-manno-heptose 7-phosphate + D-glycero-beta-D-manno-heptose 7-phosphate. Its pathway is carbohydrate biosynthesis; D-glycero-D-manno-heptose 7-phosphate biosynthesis; D-glycero-alpha-D-manno-heptose 7-phosphate and D-glycero-beta-D-manno-heptose 7-phosphate from sedoheptulose 7-phosphate: step 1/1. In terms of biological role, catalyzes the isomerization of sedoheptulose 7-phosphate in D-glycero-D-manno-heptose 7-phosphate. This chain is Phosphoheptose isomerase, found in Bradyrhizobium sp. (strain ORS 278).